Here is a 315-residue protein sequence, read N- to C-terminus: uncharacterized protein (315 aa).

This is an uncharacterized protein from Bos taurus (Bovine).